The chain runs to 367 residues: Inositol-3-phosphate synthase (367 aa).

Serine 2 bears the N-acetylserine mark. Lysine 73 is covalently cross-linked (Isoglutamyl lysine isopeptide (Lys-Gln) (interchain with Q-Cter in protein Pup)). 6 residues coordinate NAD(+): aspartate 78, alanine 137, tyrosine 157, serine 200, aspartate 235, and lysine 248.

This sequence belongs to the myo-inositol 1-phosphate synthase family. The cofactor is NAD(+). In terms of processing, pupylated at Lys-73 by the prokaryotic ubiquitin-like protein Pup, which leads to its degradation by the proteasome.

The catalysed reaction is D-glucose 6-phosphate = 1D-myo-inositol 3-phosphate. In terms of biological role, key enzyme in myo-inositol biosynthesis pathway that catalyzes the conversion of glucose 6-phosphate to 1D-myo-inositol 3-phosphate in a NAD-dependent manner. This is Inositol-3-phosphate synthase (ino1) from Mycobacterium tuberculosis (strain ATCC 25618 / H37Rv).